The primary structure comprises 539 residues: Chaperonin GroEL (539 aa).

ATP-binding positions include 29–32 (TIGP), 86–90 (DGTTT), Gly413, 476–478 (NAA), and Asp492.

This sequence belongs to the chaperonin (HSP60) family. As to quaternary structure, forms a cylinder of 14 subunits composed of two heptameric rings stacked back-to-back. Interacts with the co-chaperonin GroES.

It localises to the cytoplasm. It carries out the reaction ATP + H2O + a folded polypeptide = ADP + phosphate + an unfolded polypeptide.. Its function is as follows. Together with its co-chaperonin GroES, plays an essential role in assisting protein folding. The GroEL-GroES system forms a nano-cage that allows encapsulation of the non-native substrate proteins and provides a physical environment optimized to promote and accelerate protein folding. In Leuconostoc mesenteroides subsp. mesenteroides (strain ATCC 8293 / DSM 20343 / BCRC 11652 / CCM 1803 / JCM 6124 / NCDO 523 / NBRC 100496 / NCIMB 8023 / NCTC 12954 / NRRL B-1118 / 37Y), this protein is Chaperonin GroEL.